Here is a 325-residue protein sequence, read N- to C-terminus: Bifunctional nuclease 2 (325 aa).

Residues 119–254 form the BFN domain; sequence CVHNNSQGRN…SLAYSDGIRS (136 aa). In terms of domain architecture, UVR spans 285–320; the sequence is EAQEFGLIRNMLIAAVEERYKDAATWRDKLMLLRSK.

This sequence belongs to the bifunctional nuclease family.

Its subcellular location is the nucleus. Its function is as follows. Bifunctional nuclease with both RNase and DNase activities. Involved in basal defense response. Participates in abscisic acid-derived callose deposition following infection by a necrotrophic pathogen. This chain is Bifunctional nuclease 2 (BBD2), found in Oryza sativa subsp. japonica (Rice).